The following is a 739-amino-acid chain: Transcription regulator protein BACH1 (739 aa).

Residues 34–100 form the BTB domain; sequence CDVTVLVEGQ…AYTAKLILSK (67 aa). Ser196 bears the Phosphoserine mark. 2 disordered regions span residues 287 to 321 and 344 to 391; these read MESE…PHGL and KTVK…RSSV. Basic and acidic residues-rich tracts occupy residues 346-364 and 376-391; these read VKTE…KPSE and PKED…RSSV. Ser448 carries the post-translational modification Phosphoserine. One can recognise a bZIP domain in the interval 560–623; it reads CIHDIRRRSK…GETKQNLTGL (64 aa). Residues 565–581 form a basic motif region; sequence RRRSKNRIAAQRCRKRK. The segment at 585–592 is leucine-zipper; that stretch reads IQNLESEI. Residues 679-708 are disordered; that stretch reads PPTAPPPCGRGSSAASQELVQESPPTTAAA. Low complexity predominate over residues 699 to 708; sequence QESPPTTAAA.

It belongs to the bZIP family. CNC subfamily. As to quaternary structure, heterodimer of BACH1 and MAFK. In terms of processing, ubiquitinated by the SCF(FBXL17) complex or by the by the SCF(FBXO22) complex, leading to its degradation by the proteasome. Under oxidative stress, reactive oxygen species covalently modify cysteine residues on the bZIP domain of BACH1 and release it from chromatin. If the BTB domain of BACH1 remains intact, its beta1-alpha6 degron is recognized by FBXO22, promoting its ubiquitination and degradation. If the structural integrity of the beta1-alpha6 degron is compromised, FBXL17 will transiently associate with the BACH1 BTB dimer and remodel it into stably bound monomer for ubiquitination and degradation. In terms of tissue distribution, ubiquitous.

It localises to the nucleus. Its function is as follows. Transcriptional regulator that acts as a repressor or activator, depending on the context. Binds to NF-E2 DNA binding sites. Plays important roles in coordinating transcription activation and repression by MAFK. Together with MAF, represses the transcription of genes under the control of the NFE2L2 oxidative stress pathway. The sequence is that of Transcription regulator protein BACH1 (Bach1) from Mus musculus (Mouse).